Here is a 369-residue protein sequence, read N- to C-terminus: Anhydro-N-acetylmuramic acid kinase (369 aa).

Residue 12–19 (GTSLDGVD) coordinates ATP.

Belongs to the anhydro-N-acetylmuramic acid kinase family.

The enzyme catalyses 1,6-anhydro-N-acetyl-beta-muramate + ATP + H2O = N-acetyl-D-muramate 6-phosphate + ADP + H(+). It participates in amino-sugar metabolism; 1,6-anhydro-N-acetylmuramate degradation. It functions in the pathway cell wall biogenesis; peptidoglycan recycling. In terms of biological role, catalyzes the specific phosphorylation of 1,6-anhydro-N-acetylmuramic acid (anhMurNAc) with the simultaneous cleavage of the 1,6-anhydro ring, generating MurNAc-6-P. Is required for the utilization of anhMurNAc either imported from the medium or derived from its own cell wall murein, and thus plays a role in cell wall recycling. This Escherichia coli O45:K1 (strain S88 / ExPEC) protein is Anhydro-N-acetylmuramic acid kinase.